The chain runs to 493 residues: Cardiolipin synthase 1 (493 aa).

2 helical membrane-spanning segments follow: residues Phe-13–Phe-33 and Trp-45–Phe-65. PLD phosphodiesterase domains are found at residues Met-228 to Tyr-255 and Glu-406 to Ser-433. Active-site residues include His-233, Lys-235, Asp-240, His-411, Lys-413, and Asp-418.

It belongs to the phospholipase D family. Cardiolipin synthase subfamily.

Its subcellular location is the cell membrane. The catalysed reaction is 2 a 1,2-diacyl-sn-glycero-3-phospho-(1'-sn-glycerol) = a cardiolipin + glycerol. Functionally, catalyzes the reversible phosphatidyl group transfer from one phosphatidylglycerol molecule to another to form cardiolipin (CL) (diphosphatidylglycerol) and glycerol. The polypeptide is Cardiolipin synthase 1 (cls1) (Staphylococcus aureus (strain COL)).